Here is a 339-residue protein sequence, read N- to C-terminus: Glycerol-3-phosphate dehydrogenase [NAD(P)+] (339 aa).

NADPH-binding residues include S15, Y16, H36, and K110. K110, G139, and T141 together coordinate sn-glycerol 3-phosphate. A143 is a binding site for NADPH. Residues K195, D248, S258, R259, and N260 each contribute to the sn-glycerol 3-phosphate site. Residue K195 is the Proton acceptor of the active site. Position 259 (R259) interacts with NADPH. Residues V283 and E285 each contribute to the NADPH site.

This sequence belongs to the NAD-dependent glycerol-3-phosphate dehydrogenase family.

It localises to the cytoplasm. It carries out the reaction sn-glycerol 3-phosphate + NAD(+) = dihydroxyacetone phosphate + NADH + H(+). The catalysed reaction is sn-glycerol 3-phosphate + NADP(+) = dihydroxyacetone phosphate + NADPH + H(+). Its pathway is membrane lipid metabolism; glycerophospholipid metabolism. Functionally, catalyzes the reduction of the glycolytic intermediate dihydroxyacetone phosphate (DHAP) to sn-glycerol 3-phosphate (G3P), the key precursor for phospholipid synthesis. The polypeptide is Glycerol-3-phosphate dehydrogenase [NAD(P)+] (Enterobacter sp. (strain 638)).